The sequence spans 368 residues: Agmatine deiminase (368 aa).

Cys-357 functions as the Amidino-cysteine intermediate in the catalytic mechanism.

Belongs to the agmatine deiminase family. Homodimer.

It carries out the reaction agmatine + H2O = N-carbamoylputrescine + NH4(+). The protein operates within amine and polyamine biosynthesis; putrescine biosynthesis via agmatine pathway; N-carbamoylputrescine from agmatine: step 1/1. In terms of biological role, mediates the hydrolysis of agmatine into N-carbamoylputrescine in the arginine decarboxylase (ADC) pathway of putrescine biosynthesis, a basic polyamine. The sequence is that of Agmatine deiminase from Pseudomonas putida (strain ATCC 700007 / DSM 6899 / JCM 31910 / BCRC 17059 / LMG 24140 / F1).